A 605-amino-acid polypeptide reads, in one-letter code: Elongation factor 4 (605 aa).

The region spanning 11–193 (EKIRNFSIIA…QIVEKVPAPT (183 aa)) is the tr-type G domain. Residues 23–28 (DHGKST) and 140–143 (NKID) each bind GTP.

This sequence belongs to the TRAFAC class translation factor GTPase superfamily. Classic translation factor GTPase family. LepA subfamily.

The protein resides in the cell membrane. It catalyses the reaction GTP + H2O = GDP + phosphate + H(+). In terms of biological role, required for accurate and efficient protein synthesis under certain stress conditions. May act as a fidelity factor of the translation reaction, by catalyzing a one-codon backward translocation of tRNAs on improperly translocated ribosomes. Back-translocation proceeds from a post-translocation (POST) complex to a pre-translocation (PRE) complex, thus giving elongation factor G a second chance to translocate the tRNAs correctly. Binds to ribosomes in a GTP-dependent manner. The chain is Elongation factor 4 from Streptococcus pyogenes serotype M4 (strain MGAS10750).